We begin with the raw amino-acid sequence, 250 residues long: UPF0736 protein RBAM_011410 (250 aa).

This sequence belongs to the UPF0736 family.

This Bacillus velezensis (strain DSM 23117 / BGSC 10A6 / LMG 26770 / FZB42) (Bacillus amyloliquefaciens subsp. plantarum) protein is UPF0736 protein RBAM_011410.